We begin with the raw amino-acid sequence, 280 residues long: MRVILAKRAGFCFGVKRATQMAFEAAGMDKKTYTLGPIIHSPQVVKKLEEMGVRALKDLDSMDSGTIIIRSHGVASHEIAEAMQKKLEIVDATCPFVKKAQEHVKSLSETGYGVVVVGDADHPEVQGIVSYGGDKVFVVGSGEEVRKLPIMNKIGVVAQTTQSFENLKNVVSECLQRGGEIRVFNTICDATAVRQEEAKELARQVDCMLVVGGFNSANTRRLAEVCAELQPRTHHIETAAEIDPAWFEGVATVGVTAGASTPKWIIDEVMGRIGEINKKN.

Cys-12 is a binding site for [4Fe-4S] cluster. The (2E)-4-hydroxy-3-methylbut-2-enyl diphosphate site is built by His-40 and His-72. 2 residues coordinate dimethylallyl diphosphate: His-40 and His-72. Positions 40 and 72 each coordinate isopentenyl diphosphate. Cys-94 contacts [4Fe-4S] cluster. His-122 is a binding site for (2E)-4-hydroxy-3-methylbut-2-enyl diphosphate. His-122 contributes to the dimethylallyl diphosphate binding site. His-122 lines the isopentenyl diphosphate pocket. Glu-124 acts as the Proton donor in catalysis. Thr-160 provides a ligand contact to (2E)-4-hydroxy-3-methylbut-2-enyl diphosphate. Cys-188 contributes to the [4Fe-4S] cluster binding site. 3 residues coordinate (2E)-4-hydroxy-3-methylbut-2-enyl diphosphate: Ser-216, Asn-218, and Ser-260. 3 residues coordinate dimethylallyl diphosphate: Ser-216, Asn-218, and Ser-260. Ser-216, Asn-218, and Ser-260 together coordinate isopentenyl diphosphate.

It belongs to the IspH family. It depends on [4Fe-4S] cluster as a cofactor.

It carries out the reaction isopentenyl diphosphate + 2 oxidized [2Fe-2S]-[ferredoxin] + H2O = (2E)-4-hydroxy-3-methylbut-2-enyl diphosphate + 2 reduced [2Fe-2S]-[ferredoxin] + 2 H(+). The catalysed reaction is dimethylallyl diphosphate + 2 oxidized [2Fe-2S]-[ferredoxin] + H2O = (2E)-4-hydroxy-3-methylbut-2-enyl diphosphate + 2 reduced [2Fe-2S]-[ferredoxin] + 2 H(+). It participates in isoprenoid biosynthesis; dimethylallyl diphosphate biosynthesis; dimethylallyl diphosphate from (2E)-4-hydroxy-3-methylbutenyl diphosphate: step 1/1. It functions in the pathway isoprenoid biosynthesis; isopentenyl diphosphate biosynthesis via DXP pathway; isopentenyl diphosphate from 1-deoxy-D-xylulose 5-phosphate: step 6/6. Its function is as follows. Catalyzes the conversion of 1-hydroxy-2-methyl-2-(E)-butenyl 4-diphosphate (HMBPP) into a mixture of isopentenyl diphosphate (IPP) and dimethylallyl diphosphate (DMAPP). Acts in the terminal step of the DOXP/MEP pathway for isoprenoid precursor biosynthesis. This is 4-hydroxy-3-methylbut-2-enyl diphosphate reductase from Pelobacter propionicus (strain DSM 2379 / NBRC 103807 / OttBd1).